Consider the following 531-residue polypeptide: Arginine--tRNA ligase (531 aa).

The 'HIGH' region signature appears at Ala-113–His-123.

Belongs to the class-I aminoacyl-tRNA synthetase family. As to quaternary structure, monomer.

It is found in the cytoplasm. The catalysed reaction is tRNA(Arg) + L-arginine + ATP = L-arginyl-tRNA(Arg) + AMP + diphosphate. The polypeptide is Arginine--tRNA ligase (Campylobacter lari (strain RM2100 / D67 / ATCC BAA-1060)).